Reading from the N-terminus, the 260-residue chain is MALRRPMVAGNWKMNGTAQLAQELFTKFATKLQNDSAEVVLCPPSIFLESVRQQLDANKEALNGCLVRMGAQNLSQHDFGAYTGEVSGQMLKDSGCRYVIIGHSERRRMYGETSDIVAEKFAAAQKHGLTPILCVGESGPAREARRTFEVIAEELDVVIEKNGTMAFDNAIIAYEPLWAVGTGKSATPEQAQEVHAFIRKRLSEVSPYIGENIRILYGGSVTPSNAADLFAQPDVDGGLIGGASLNSTEFLSLCSIAMSA.

11–13 lines the substrate pocket; the sequence is NWK. The active-site Electrophile is the H103. The active-site Proton acceptor is the E175. Substrate is bound by residues G181, S220, and 241–242; that span reads GG.

It belongs to the triosephosphate isomerase family. In terms of assembly, homodimer.

It localises to the cytoplasm. It catalyses the reaction D-glyceraldehyde 3-phosphate = dihydroxyacetone phosphate. It functions in the pathway carbohydrate biosynthesis; gluconeogenesis. The protein operates within carbohydrate degradation; glycolysis; D-glyceraldehyde 3-phosphate from glycerone phosphate: step 1/1. Involved in the gluconeogenesis. Catalyzes stereospecifically the conversion of dihydroxyacetone phosphate (DHAP) to D-glyceraldehyde-3-phosphate (G3P). The protein is Triosephosphate isomerase of Shewanella loihica (strain ATCC BAA-1088 / PV-4).